Consider the following 318-residue polypeptide: MFLINVLTVTLPILLAVAFLTLVERKALGYMQLRKGPNVVGPYGLLQPIADAIKLFTKEPIYPQTSSKFLFTVAPILALTLALTVWAPLPMPYPLINLNLSLLFILAMSSLMVYSILWSGWASNSKYALMGALRAVAQTISYEVSMTTITLSMVLMNGSFTLTAFAMTQEHLWLILPMWPLMMMWFTSTLAETNRAPFDLTEGESELVSGFNVEYSAGPFALFFMAEYANIIMMNALTVILFMGTSYDPQMPEISTINFVMKTIILTICFLWVRASYPRFRYDQLMHLLWKNFLPLTLALCMWHISVLISLACIPPQA.

A run of 8 helical transmembrane segments spans residues 2–22, 69–89, 102–122, 146–166, 171–191, 222–242, 253–273, and 294–314; these read FLIN…FLTL, FLFT…WAPL, LLFI…SGWA, MTTI…TAFA, HLWL…STLA, LFFM…VILF, EIST…FLWV, and LPLT…LACI.

Belongs to the complex I subunit 1 family.

The protein localises to the mitochondrion inner membrane. It catalyses the reaction a ubiquinone + NADH + 5 H(+)(in) = a ubiquinol + NAD(+) + 4 H(+)(out). Its function is as follows. Core subunit of the mitochondrial membrane respiratory chain NADH dehydrogenase (Complex I) that is believed to belong to the minimal assembly required for catalysis. Complex I functions in the transfer of electrons from NADH to the respiratory chain. The immediate electron acceptor for the enzyme is believed to be ubiquinone. This Loxodonta africana (African elephant) protein is NADH-ubiquinone oxidoreductase chain 1 (MT-ND1).